We begin with the raw amino-acid sequence, 128 residues long: Mu-like prophage FluMu protein gp35 (128 aa).

Residues 53 to 87 (TETGSQEGGEGLSKEPAGSDEQKQLRADPPSTDLN) form a disordered region.

To phage Mu protein gp35. In terms of assembly, monomer.

In Haemophilus influenzae (strain ATCC 51907 / DSM 11121 / KW20 / Rd), this protein is Mu-like prophage FluMu protein gp35.